Here is a 379-residue protein sequence, read N- to C-terminus: Demethylspheroidene O-methyltransferase (379 aa).

S-adenosyl-L-methionine is bound by residues D235 and R279.

The protein belongs to the class I-like SAM-binding methyltransferase superfamily. Cation-independent O-methyltransferase family.

It catalyses the reaction demethylspheroidene + S-adenosyl-L-methionine = spheroidene + S-adenosyl-L-homocysteine + H(+). The protein operates within carotenoid biosynthesis; spheroidene biosynthesis. Functionally, methyltransferase that mediates the O-methylation of 1-hydroxy carotenoids. Converts hydroxyneurosporene to methoxyneurosporene or demethylspheroidene to spheroidene. Also able to produce spirilloxanthin. The polypeptide is Demethylspheroidene O-methyltransferase (crtF) (Cereibacter sphaeroides (strain ATCC 17023 / DSM 158 / JCM 6121 / CCUG 31486 / LMG 2827 / NBRC 12203 / NCIMB 8253 / ATH 2.4.1.) (Rhodobacter sphaeroides)).